The following is a 127-amino-acid chain: Small ribosomal subunit protein bS16 (127 aa).

The segment at 80-127 (GLKKRPTRNNPHKGEPGKKAQERIAAAKQAAEEAAAAKTESAPISEEV) is disordered. A compositionally biased stretch (basic residues) spans 81-90 (LKKRPTRNNP). Residues 91 to 101 (HKGEPGKKAQE) show a composition bias toward basic and acidic residues. Low complexity predominate over residues 102-121 (RIAAAKQAAEEAAAAKTESA).

Belongs to the bacterial ribosomal protein bS16 family.

In Bartonella henselae (strain ATCC 49882 / DSM 28221 / CCUG 30454 / Houston 1) (Rochalimaea henselae), this protein is Small ribosomal subunit protein bS16.